A 426-amino-acid chain; its full sequence is uncharacterized protein (426 aa).

This is an uncharacterized protein from Acidianus filamentous virus 1 (isolate United States/Yellowstone) (AFV-1).